A 173-amino-acid polypeptide reads, in one-letter code: Alpha-crystallin A chain (173 aa).

Methionine 1 is subject to N-acetylmethionine. A required for complex formation with BFSP1 and BFSP2 region spans residues 1–63 (MDIAIQHPWF…RTVLDSGISE (63 aa)). Position 6 is a deamidated glutamine; partial (glutamine 6). Phosphoserine is present on serine 45. At glutamine 50 the chain carries Deamidated glutamine; partial. The sHSP domain occupies 52 to 162 (LFRTVLDSGI…GHSERAIPVS (111 aa)). Lysine 70 carries the N6-acetyllysine modification. A Deamidated glutamine; partial modification is found at glutamine 90. Residue lysine 99 is modified to N6-acetyllysine. A Zn(2+)-binding site is contributed by histidine 100. Asparagine 101 carries the deamidated asparagine; partial modification. Zn(2+) contacts are provided by glutamate 102 and histidine 107. Serine 122 carries the post-translational modification Phosphoserine. Deamidated asparagine; partial is present on asparagine 123. The tract at residues 144 to 173 (PKIPSGVDAGHSERAIPVSREEKPSSAPSS) is disordered. Basic and acidic residues predominate over residues 153 to 167 (GHSERAIPVSREEKP). Residue histidine 154 participates in Zn(2+) binding. O-linked (GlcNAc) serine glycosylation is present at serine 162.

It belongs to the small heat shock protein (HSP20) family. Heteromer composed of three CRYAA and one CRYAB subunits. Inter-subunit bridging via zinc ions enhances stability, which is crucial as there is no protein turn over in the lens. Can also form homodimers and homotetramers (dimers of dimers) which serve as the building blocks of homooligomers. Within homooligomers, the zinc-binding motif is created from residues of 3 different molecules. His-100 and Glu-102 from one molecule are ligands of the zinc ion, and His-107 and His-154 residues from additional molecules complete the site with tetrahedral coordination geometry. Part of a complex required for lens intermediate filament formation composed of BFSP1, BFSP2 and CRYAA. Post-translationally, acetylation at Lys-70 may increase chaperone activity. In terms of processing, undergoes age-dependent proteolytical cleavage at the C-terminus.

Its subcellular location is the cytoplasm. It is found in the nucleus. Functionally, contributes to the transparency and refractive index of the lens. Acts as a chaperone, preventing aggregation of various proteins under a wide range of stress conditions. Required for the correct formation of lens intermediate filaments as part of a complex composed of BFSP1, BFSP2 and CRYAA. The protein is Alpha-crystallin A chain (CRYAA) of Giraffa camelopardalis (Giraffe).